The sequence spans 803 residues: Urocanate reductase (803 aa).

The residue at position 258 (S258) is an FMN phosphoryl serine. The FAD site is built by A311, E330, N338, T339, G343, G344, and D573. Catalysis depends on R632, which acts as the Proton donor. 4 residues coordinate FAD: H739, E768, A783, and L784.

The protein belongs to the FAD-dependent oxidoreductase 2 family. FRD/SDH subfamily. FAD serves as cofactor. The cofactor is FMN.

The catalysed reaction is dihydrourocanate + A = urocanate + AH2. Its function is as follows. Catalyzes the two-electron reduction of urocanate to dihydrourocanate (also named imidazole propionate or deamino-histidine). Dihydrourocanate is present at higher concentrations in subjects with type 2 diabetes, and directly impairs glucose tolerance and insulin signaling at the level of insulin receptor substrate (IRS) through activation of p38 gamma (MAPK12)-p62-mTORC1. Therefore, the UrdA enzyme from the gut bacteria S.mutans strain UA159 may contribute to the pathogenesis of type 2 diabetes by producing the microbial metabolite dihydrourocanate. The chain is Urocanate reductase from Streptococcus mutans serotype c (strain ATCC 700610 / UA159).